Consider the following 156-residue polypeptide: LIM domain only protein 3 (156 aa).

LIM zinc-binding domains are found at residues 22 to 84 and 86 to 148; these read KGCA…LFGV and GNCA…GLMK.

The polypeptide is LIM domain only protein 3 (Xenopus laevis (African clawed frog)).